Consider the following 120-residue polypeptide: Small ribosomal subunit protein uS17m (120 aa).

The N-terminal 20 residues, 1–20 (MSIVRSSVHAKWVVGKVIGT), are a transit peptide targeting the mitochondrion.

The protein belongs to the universal ribosomal protein uS17 family. In terms of assembly, component of the mitochondrial ribosome small subunit (28S) which comprises a 12S rRNA and about 30 distinct proteins.

It localises to the mitochondrion. This chain is Small ribosomal subunit protein uS17m (Mrps17), found in Mus musculus (Mouse).